Consider the following 329-residue polypeptide: Beta-ketoacyl-[acyl-carrier-protein] synthase III (329 aa).

Active-site residues include Cys-123 and His-256. The tract at residues 257–261 (QANIR) is ACP-binding. The active site involves Asn-286.

This sequence belongs to the thiolase-like superfamily. FabH family. As to quaternary structure, homodimer.

It is found in the cytoplasm. It carries out the reaction malonyl-[ACP] + acetyl-CoA + H(+) = 3-oxobutanoyl-[ACP] + CO2 + CoA. It functions in the pathway lipid metabolism; fatty acid biosynthesis. Functionally, catalyzes the condensation reaction of fatty acid synthesis by the addition to an acyl acceptor of two carbons from malonyl-ACP. Catalyzes the first condensation reaction which initiates fatty acid synthesis and may therefore play a role in governing the total rate of fatty acid production. Possesses both acetoacetyl-ACP synthase and acetyl transacylase activities. Its substrate specificity determines the biosynthesis of branched-chain and/or straight-chain of fatty acids. The protein is Beta-ketoacyl-[acyl-carrier-protein] synthase III of Burkholderia vietnamiensis (strain G4 / LMG 22486) (Burkholderia cepacia (strain R1808)).